The chain runs to 285 residues: Putative hydrolase DDAH2 (285 aa).

H171 acts as the Proton donor in catalysis. The active-site Nucleophile is the C276.

The protein belongs to the DDAH family. In terms of processing, phosphorylated by TBK1. Phosphorylation inhibits the translocation into the mitochondrion upon Sendai viral infection. Detected in heart, placenta, lung, liver, skeletal muscle, kidney and pancreas, and at very low levels in brain.

Its subcellular location is the cytoplasm. The protein resides in the mitochondrion. Putative hydrolase with unknown substrate. Does not hydrolyze N(G),N(G)-dimethyl-L-arginine (ADMA) which acts as an inhibitor of NOS. In endothelial cells, induces expression of vascular endothelial growth factor (VEGF) via phosphorylation of the transcription factor SP1 by PKA in a process that is independent of NO and NO synthase. Similarly, enhances pancreatic insulin secretion through SP1-mediated transcriptional up-regulation of secretagogin/SCGN, an insulin vesicle docking protein. Upon viral infection, relocates to mitochondria where it promotes mitochondrial fission through activation of DNM1L leading to the inhibition of innate response activation mediated by MAVS. This chain is Putative hydrolase DDAH2, found in Homo sapiens (Human).